Here is a 437-residue protein sequence, read N- to C-terminus: La-related protein 7 homolog (437 aa).

Positions 38-145 constitute an HTH La-type RNA-binding domain; sequence SKSPSLTIPK…KRKKKFDNRT (108 aa). Residues 279–397 enclose the xRRM domain; the sequence is ELSQSCFLKI…QRSSIDEIKA (119 aa). Over residues 417–427 the composition is skewed to basic residues; that stretch reads RRPVSKRKNKA. Residues 417 to 437 are disordered; it reads RRPVSKRKNKAINKMSTEVKK.

This sequence belongs to the LARP7 family. In terms of assembly, component of the telomerase holoenzyme complex composed minimally of the catalytic subunit p123 and the telomerase RNA template component. In terms of processing, the mature form of the protein is a protein of 43 kDa, which is derived from a 51 kDa precursor by proteolytic cleavage.

The protein localises to the nucleus. It localises to the chromosome. Its subcellular location is the telomere. RNA-binding protein required for assembly of the holoenzyme telomerase ribonucleoprotein (RNP) complex. Specifically binds telomerase RNA and promotes its assembly with catalytic subunit p123, thereby stimulating enzymatic activity and processivity of p123. Telomerase is a ribonucleoprotein enzyme essential that copies new telomeric repeats onto chromosome ends and functions to maintain cell division. The protein is La-related protein 7 homolog of Euplotes aediculatus (Ciliate).